We begin with the raw amino-acid sequence, 316 residues long: Adenine deaminase (316 aa).

Zn(2+) is bound by residues H14, H16, and H194. E197 (proton donor) is an active-site residue. Residue D275 participates in Zn(2+) binding. D276 is a binding site for substrate.

The protein belongs to the metallo-dependent hydrolases superfamily. Adenosine and AMP deaminases family. Adenine deaminase type 2 subfamily. Zn(2+) serves as cofactor.

It catalyses the reaction adenine + H2O + H(+) = hypoxanthine + NH4(+). Functionally, catalyzes the hydrolytic deamination of adenine to hypoxanthine. Plays an important role in the purine salvage pathway and in nitrogen catabolism. This Stutzerimonas stutzeri (strain A1501) (Pseudomonas stutzeri) protein is Adenine deaminase.